The primary structure comprises 276 residues: Dermonecrotic toxin LlSicTox-alphaIV1ii (276 aa).

His-5 is a catalytic residue. Glu-25 and Asp-27 together coordinate Mg(2+). Residue His-41 is the Nucleophile of the active site. Cystine bridges form between Cys-45–Cys-51 and Cys-47–Cys-193. Asp-85 is a binding site for Mg(2+).

This sequence belongs to the arthropod phospholipase D family. Class II subfamily. The cofactor is Mg(2+). As to expression, expressed by the venom gland.

It localises to the secreted. The catalysed reaction is an N-(acyl)-sphingosylphosphocholine = an N-(acyl)-sphingosyl-1,3-cyclic phosphate + choline. It carries out the reaction an N-(acyl)-sphingosylphosphoethanolamine = an N-(acyl)-sphingosyl-1,3-cyclic phosphate + ethanolamine. It catalyses the reaction a 1-acyl-sn-glycero-3-phosphocholine = a 1-acyl-sn-glycero-2,3-cyclic phosphate + choline. The enzyme catalyses a 1-acyl-sn-glycero-3-phosphoethanolamine = a 1-acyl-sn-glycero-2,3-cyclic phosphate + ethanolamine. Its function is as follows. Dermonecrotic toxins cleave the phosphodiester linkage between the phosphate and headgroup of certain phospholipids (sphingolipid and lysolipid substrates), forming an alcohol (often choline) and a cyclic phosphate. This toxin acts on sphingomyelin (SM). It may also act on ceramide phosphoethanolamine (CPE), lysophosphatidylcholine (LPC) and lysophosphatidylethanolamine (LPE), but not on lysophosphatidylserine (LPS), and lysophosphatidylglycerol (LPG). It acts by transphosphatidylation, releasing exclusively cyclic phosphate products as second products. Induces dermonecrosis, hemolysis, increased vascular permeability, edema, inflammatory response, and platelet aggregation. This Loxosceles laeta (South American recluse spider) protein is Dermonecrotic toxin LlSicTox-alphaIV1ii.